Reading from the N-terminus, the 183-residue chain is Phosphinothricin N-acetyltransferase (183 aa).

The region spanning 8–173 is the N-acetyltransferase domain; that stretch reads ADIRRATEAD…WQLDFSLPVP (166 aa). Residues 91 to 93, 99 to 104, and asparagine 130 contribute to the acetyl-CoA site; these read VYV and RTGLGS.

This sequence belongs to the acetyltransferase family. PAT/BAR subfamily.

The enzyme catalyses phosphinothricin + acetyl-CoA = N-acetylphosphinothricin + CoA + H(+). In terms of biological role, inactivates phosphinothricin (PPT) by transfer of an acetyl group from acetyl CoA. Can also acetylate demethylphosphinothricin but not PTT or glutamate. This enzyme is an effector of phosphinothricin tripeptide (PTT or bialaphos) resistance. This Streptomyces hygroscopicus protein is Phosphinothricin N-acetyltransferase.